Consider the following 1400-residue polypeptide: DNA-directed RNA polymerase subunit beta (1400 aa).

It belongs to the RNA polymerase beta chain family. The RNAP catalytic core consists of 2 alpha, 1 beta, 1 beta' and 1 omega subunit. When a sigma factor is associated with the core the holoenzyme is formed, which can initiate transcription.

The catalysed reaction is RNA(n) + a ribonucleoside 5'-triphosphate = RNA(n+1) + diphosphate. Functionally, DNA-dependent RNA polymerase catalyzes the transcription of DNA into RNA using the four ribonucleoside triphosphates as substrates. This Acidiphilium cryptum (strain JF-5) protein is DNA-directed RNA polymerase subunit beta.